The following is a 101-amino-acid chain: NAD(P)H-quinone oxidoreductase subunit 4L, chloroplastic (101 aa).

A run of 3 helical transmembrane segments spans residues 2–22, 32–52, and 61–81; these read MLEH…YGLI, MCLE…SGFF, and IFSV…LAIV.

The protein belongs to the complex I subunit 4L family. As to quaternary structure, NDH is composed of at least 16 different subunits, 5 of which are encoded in the nucleus.

Its subcellular location is the plastid. It is found in the chloroplast thylakoid membrane. It catalyses the reaction a plastoquinone + NADH + (n+1) H(+)(in) = a plastoquinol + NAD(+) + n H(+)(out). The catalysed reaction is a plastoquinone + NADPH + (n+1) H(+)(in) = a plastoquinol + NADP(+) + n H(+)(out). Functionally, NDH shuttles electrons from NAD(P)H:plastoquinone, via FMN and iron-sulfur (Fe-S) centers, to quinones in the photosynthetic chain and possibly in a chloroplast respiratory chain. The immediate electron acceptor for the enzyme in this species is believed to be plastoquinone. Couples the redox reaction to proton translocation, and thus conserves the redox energy in a proton gradient. The sequence is that of NAD(P)H-quinone oxidoreductase subunit 4L, chloroplastic from Jasminum nudiflorum (Winter jasmine).